The sequence spans 309 residues: GTP cyclohydrolase MptA 2 (309 aa).

This sequence belongs to the GTP cyclohydrolase IV family. As to quaternary structure, homodimer. Fe(2+) serves as cofactor.

The enzyme catalyses GTP + H2O = 7,8-dihydroneopterin 2',3'-cyclic phosphate + formate + diphosphate + H(+). The protein operates within cofactor biosynthesis; 5,6,7,8-tetrahydromethanopterin biosynthesis. Its function is as follows. Converts GTP to 7,8-dihydro-D-neopterin 2',3'-cyclic phosphate, the first intermediate in the biosynthesis of coenzyme methanopterin. The chain is GTP cyclohydrolase MptA 2 from Methanocella arvoryzae (strain DSM 22066 / NBRC 105507 / MRE50).